Here is a 209-residue protein sequence, read N- to C-terminus: Small ribosomal subunit protein uS4 (209 aa).

Residues 99-161 (CRLDNIAFRL…SSKLVVVEMG (63 aa)) form the S4 RNA-binding domain.

The protein belongs to the universal ribosomal protein uS4 family. Part of the 30S ribosomal subunit. Contacts protein S5. The interaction surface between S4 and S5 is involved in control of translational fidelity.

In terms of biological role, one of the primary rRNA binding proteins, it binds directly to 16S rRNA where it nucleates assembly of the body of the 30S subunit. Its function is as follows. With S5 and S12 plays an important role in translational accuracy. The sequence is that of Small ribosomal subunit protein uS4 from Acidobacterium capsulatum (strain ATCC 51196 / DSM 11244 / BCRC 80197 / JCM 7670 / NBRC 15755 / NCIMB 13165 / 161).